The primary structure comprises 400 residues: Putative C-type lectin domain family 20 member A (400 aa).

The first 20 residues, 1 to 20, serve as a signal peptide directing secretion; it reads MLPRALLLSFCAAALQLVSS. C-type lectin domains are found at residues 26–131 and 159–275; these read LVKE…FLCY and ISGQ…FFCF. 4 cysteine pairs are disulfide-bonded: C40–C130, C105–C122, C180–C274, and C248–C266. Residues 287-346 form a disordered region; sequence ELPPLFHTSPTEMTEETTPRPGRAVASVGSGTDRRDTAAATEAQHLSSESKEKTSAQKSG.

This is Putative C-type lectin domain family 20 member A from Homo sapiens (Human).